A 263-amino-acid polypeptide reads, in one-letter code: (E)-2-((N-methylformamido)methylene)succinate hydrolase (263 aa).

The active-site Nucleophile is the Ser-96. Active-site residues include Asn-120 and His-241.

The protein belongs to the AB hydrolase superfamily. In terms of assembly, monomer.

The enzyme catalyses (E)-2-((N-methylformamido) methylene)succinate + 2 H2O + H(+) = succinate semialdehyde + methylamine + formate + CO2. In terms of biological role, involved in the degradation of the pyridine ring of trigonelline (TG; N-methylnicotinate) into succinate and methylamine as carbon and nitrogen sources, respectively. Catalyzes the hydrolysis of (E)-2-((N-methylformamido)methylene)succinate (MFMS) into formic acid, succinate semialdehyde (SSA), methylamine and carbon dioxide. In Acinetobacter baylyi (strain ATCC 33305 / BD413 / ADP1), this protein is (E)-2-((N-methylformamido)methylene)succinate hydrolase.